We begin with the raw amino-acid sequence, 541 residues long: Tryptophan N-monooxygenase 1 (541 aa).

A helical membrane pass occupies residues 21 to 41; the sequence is FSTLYLLSTLQAFVAITLVML. Residue Cys477 participates in heme binding.

Belongs to the cytochrome P450 family. It depends on heme as a cofactor. Found in all tissues tested. Highest expression in roots, and low expression in stem.

It localises to the membrane. It carries out the reaction L-tryptophan + 2 reduced [NADPH--hemoprotein reductase] + 2 O2 = (E)-(indol-3-yl)acetaldehyde oxime + 2 oxidized [NADPH--hemoprotein reductase] + CO2 + 3 H2O + 2 H(+). Functionally, converts tryptophan to indole-3-acetaldoxime, a precursor for tryptophan-derived glucosinolates and indole-3-acetic acid (IAA). Involved in the biosynthetic pathway to 4-hydroxyindole-3-carbonyl nitrile (4-OH-ICN), a cyanogenic metabolite required for inducible pathogen defense. This is Tryptophan N-monooxygenase 1 (CYP79B2) from Arabidopsis thaliana (Mouse-ear cress).